Here is a 261-residue protein sequence, read N- to C-terminus: Glutamate racemase (261 aa).

Substrate contacts are provided by residues 12–13 (DS) and 44–45 (YG). Cys76 functions as the Proton donor/acceptor in the catalytic mechanism. 77-78 (NT) serves as a coordination point for substrate. Catalysis depends on Cys180, which acts as the Proton donor/acceptor. 181–182 (TH) contacts substrate.

Belongs to the aspartate/glutamate racemases family.

It catalyses the reaction L-glutamate = D-glutamate. It functions in the pathway cell wall biogenesis; peptidoglycan biosynthesis. Its function is as follows. Provides the (R)-glutamate required for cell wall biosynthesis. The chain is Glutamate racemase from Borreliella burgdorferi (strain ATCC 35210 / DSM 4680 / CIP 102532 / B31) (Borrelia burgdorferi).